A 468-amino-acid chain; its full sequence is Squamosa promoter-binding-like protein 5 (468 aa).

The segment at 204 to 281 (PPRCQAEGCK…TEHNRRRRKP (78 aa)) adopts an SBP-type zinc-finger fold. Cys207, Cys212, Cys229, His232, Cys248, Cys251, His255, and Cys267 together coordinate Zn(2+). Positions 264–280 (KRSCRKRLTEHNRRRRK) match the Bipartite nuclear localization signal motif. Disordered stretches follow at residues 270–305 (RLTE…DASI), 354–374 (TLSL…DGGL), and 405–458 (HHHL…SNNN). Acidic residues predominate over residues 363-372 (QEEDDEDEDG). A compositionally biased stretch (low complexity) spans 438-458 (NNNNILSCSSASDQQNSSNNN).

Ubiquitous.

It localises to the nucleus. Trans-acting factor that binds specifically to the consensus nucleotide sequence 5'-TNCGTACAA-3'. In Oryza sativa subsp. japonica (Rice), this protein is Squamosa promoter-binding-like protein 5 (SPL5).